We begin with the raw amino-acid sequence, 55 residues long: Ferredoxin-1 (55 aa).

4Fe-4S ferredoxin-type domains lie at 2–27 (YKIE…EQGD) and 28–55 (TIFV…PVAE). [4Fe-4S] cluster contacts are provided by Cys8, Cys11, Cys14, Cys18, Cys37, Cys40, Cys43, and Cys47.

It depends on [4Fe-4S] cluster as a cofactor.

In terms of biological role, ferredoxins are iron-sulfur proteins that transfer electrons in a wide variety of metabolic reactions. The protein is Ferredoxin-1 of Rhodospirillum rubrum.